A 166-amino-acid chain; its full sequence is Peptide deformylase (166 aa).

Positions 88 and 130 each coordinate Fe cation. Residue glutamate 131 is part of the active site. Fe cation is bound at residue histidine 134.

It belongs to the polypeptide deformylase family. Fe(2+) is required as a cofactor.

The catalysed reaction is N-terminal N-formyl-L-methionyl-[peptide] + H2O = N-terminal L-methionyl-[peptide] + formate. Functionally, removes the formyl group from the N-terminal Met of newly synthesized proteins. Requires at least a dipeptide for an efficient rate of reaction. N-terminal L-methionine is a prerequisite for activity but the enzyme has broad specificity at other positions. The polypeptide is Peptide deformylase (Caldicellulosiruptor bescii (strain ATCC BAA-1888 / DSM 6725 / KCTC 15123 / Z-1320) (Anaerocellum thermophilum)).